Consider the following 320-residue polypeptide: MSTPFKMERGVKYRDAAKTSIIPVKNIDPNQDLLKKPEWMKIKLPASSAKIESIKNGMRRHGLHSVCEEASCPNLHECFNHGTATFMILGAICTRRCPFCDVAHGKPLPPDPEEPQKLAETIQDMKLKYVVITSVDRDDLPDRGAGHFSECVKAVRELNPNIKIEILVPDFRGRVTQALEKLKDNPPDVFNHNLENVPRLYKEIRPGADYGWSLKLLREFKEMFPNIPTKSGLMVGLGETNEEILQVMQDLRDNGVTMLTLGQYLQPSRHHLPVARYVPPTEFDEFRDKANEMGFEHAACGPFVRSSYHADLQASGGLVK.

Residues cysteine 67, cysteine 72, cysteine 78, cysteine 93, cysteine 97, cysteine 100, and serine 307 each contribute to the [4Fe-4S] cluster site. The region spanning 79–296 (FNHGTATFMI…RDKANEMGFE (218 aa)) is the Radical SAM core domain.

This sequence belongs to the radical SAM superfamily. Lipoyl synthase family. It depends on [4Fe-4S] cluster as a cofactor.

It is found in the cytoplasm. The enzyme catalyses [[Fe-S] cluster scaffold protein carrying a second [4Fe-4S](2+) cluster] + N(6)-octanoyl-L-lysyl-[protein] + 2 oxidized [2Fe-2S]-[ferredoxin] + 2 S-adenosyl-L-methionine + 4 H(+) = [[Fe-S] cluster scaffold protein] + N(6)-[(R)-dihydrolipoyl]-L-lysyl-[protein] + 4 Fe(3+) + 2 hydrogen sulfide + 2 5'-deoxyadenosine + 2 L-methionine + 2 reduced [2Fe-2S]-[ferredoxin]. Its pathway is protein modification; protein lipoylation via endogenous pathway; protein N(6)-(lipoyl)lysine from octanoyl-[acyl-carrier-protein]: step 2/2. Functionally, catalyzes the radical-mediated insertion of two sulfur atoms into the C-6 and C-8 positions of the octanoyl moiety bound to the lipoyl domains of lipoate-dependent enzymes, thereby converting the octanoylated domains into lipoylated derivatives. This chain is Lipoyl synthase, found in Haemophilus influenzae (strain PittEE).